The sequence spans 270 residues: 5'-AMP-activated protein kinase subunit beta-1 (270 aa).

Positions 1–44 are disordered; it reads MGNTSSERAALDRQGGHKTPRRDSSGGSKDGDRPKILMDSPEDA. Gly2 is lipidated: N-myristoyl glycine. Thr4 is modified (phosphothreonine). Phosphoserine occurs at positions 5 and 6. The segment covering 9–36 has biased composition (basic and acidic residues); the sequence is AALDRQGGHKTPRRDSSGGSKDGDRPKI. At Thr19 the chain carries Phosphothreonine. Phosphoserine; by autocatalysis occurs at positions 24 and 25. A phosphoserine mark is found at Ser40, Ser96, and Ser101. A glycogen-binding domain region spans residues 68–163; sequence EVNDKAPAQA…QVKKTDFEVF (96 aa). Phosphoserine; by autocatalysis is present on Ser108. Thr148 bears the Phosphothreonine mark. Ser182 carries the post-translational modification Phosphoserine. Lys201 carries the N6-succinyllysine modification.

It belongs to the 5'-AMP-activated protein kinase beta subunit family. In terms of assembly, AMPK is a heterotrimer of an alpha catalytic subunit (PRKAA1 or PRKAA2), a beta (PRKAB1 or PRKAB2) and a gamma non-catalytic subunits (PRKAG1, PRKAG2 or PRKAG3). Interacts with FNIP1 and FNIP2. Post-translationally, phosphorylated when associated with the catalytic subunit (PRKAA1 or PRKAA2). Phosphorylated by ULK1; leading to negatively regulate AMPK activity and suggesting the existence of a regulatory feedback loop between ULK1 and AMPK.

In terms of biological role, non-catalytic subunit of AMP-activated protein kinase (AMPK), an energy sensor protein kinase that plays a key role in regulating cellular energy metabolism. In response to reduction of intracellular ATP levels, AMPK activates energy-producing pathways and inhibits energy-consuming processes: inhibits protein, carbohydrate and lipid biosynthesis, as well as cell growth and proliferation. AMPK acts via direct phosphorylation of metabolic enzymes, and by longer-term effects via phosphorylation of transcription regulators. Also acts as a regulator of cellular polarity by remodeling the actin cytoskeleton; probably by indirectly activating myosin. Beta non-catalytic subunit acts as a scaffold on which the AMPK complex assembles, via its C-terminus that bridges alpha (PRKAA1 or PRKAA2) and gamma subunits (PRKAG1, PRKAG2 or PRKAG3). The protein is 5'-AMP-activated protein kinase subunit beta-1 (PRKAB1) of Bos taurus (Bovine).